We begin with the raw amino-acid sequence, 153 residues long: Sperm surface protein Sp17 (153 aa).

The tract at residues 74–117 (FKVPSGATESKEAPPEKSEPEKETPQEVVKEQETQVSFVEEVST) is disordered. Positions 82–106 (ESKEAPPEKSEPEKETPQEVVKEQE) are enriched in basic and acidic residues. In terms of domain architecture, IQ spans 122-151 (AAAAAVKIQAAFRGHKARKEVKIMKESSIE).

Homodimer. May interact with ROPN1. In terms of tissue distribution, testis- and sperm-specific.

It localises to the membrane. Its function is as follows. Sperm surface zona pellucida binding protein. Helps to bind spermatozoa to the zona pellucida with high affinity. Might function in binding zona pellucida and carbohydrates. This is Sperm surface protein Sp17 (SPA17) from Notamacropus eugenii (Tammar wallaby).